An 80-amino-acid chain; its full sequence is Dermaseptin-DA3 (80 aa).

The first 22 residues, 1 to 22 (MAFLKKSLFLVLFLGLVSLSIC), serve as a signal peptide directing secretion. Residues 23–42 (EEKRENEDEEEQEDDEQSEE) constitute a propeptide that is removed on maturation. Positions 24-48 (EKRENEDEEEQEDDEQSEEKRGMWS) are disordered. The span at 29–40 (EDEEEQEDDEQS) shows a compositional bias: acidic residues. Leucine 77 carries the leucine amide modification. A propeptide spanning residues 79–80 (EQ) is cleaved from the precursor.

It belongs to the frog skin active peptide (FSAP) family. Dermaseptin subfamily. As to expression, expressed by the skin glands.

The protein localises to the secreted. Possesses a potent antimicrobial activity against Gram-positive and Gram-negative bacteria. Probably acts by disturbing membrane functions with its amphipathic structure. The polypeptide is Dermaseptin-DA3 (Agalychnis dacnicolor (Giant Mexican leaf frog)).